The primary structure comprises 344 residues: Molybdate/tungstate import ATP-binding protein WtpC (344 aa).

Residues 2–231 (LRVESVSKDY…PVDEGVARFL (230 aa)) enclose the ABC transporter domain. 33–40 (GPSGAGKT) is a binding site for ATP. Residues 280–344 (KTSARNEFRA…SFKTSAIKVF (65 aa)) enclose the Mop domain.

The protein belongs to the ABC transporter superfamily. Sulfate/tungstate importer (TC 3.A.1.6) family. As to quaternary structure, the complex is composed of two ATP-binding proteins (WtpC), two transmembrane proteins (WtpB) and a solute-binding protein (WtpA).

Its subcellular location is the cell membrane. It catalyses the reaction tungstate(in) + ATP + H2O = tungstate(out) + ADP + phosphate + H(+). Part of the ABC transporter complex WtpABC involved in molybdate/tungstate import. Responsible for energy coupling to the transport system. This chain is Molybdate/tungstate import ATP-binding protein WtpC (wtpC), found in Pyrococcus abyssi (strain GE5 / Orsay).